The primary structure comprises 109 residues: uncharacterized protein (109 aa).

Residues 26-48 (VTSIMTVSDINYLLLYLIILLTL) traverse the membrane as a helical segment.

The protein localises to the membrane. This is an uncharacterized protein from Saccharomyces cerevisiae (strain ATCC 204508 / S288c) (Baker's yeast).